We begin with the raw amino-acid sequence, 242 residues long: Exosome complex component ski6 (242 aa).

The protein belongs to the RNase PH family. As to quaternary structure, component of the RNA exosome complex. Specifically part of the catalytically inactive RNA exosome core complex (Exo-9) which may associate with the catalytic subunits rrp6 and dis3 in cytoplasmic- and nuclear-specific RNA exosome complex forms. Exo-9 is formed by a hexameric base ring of RNase PH domain-containing subunits and a cap ring consisting of csl4, rrp4 and rrp40.

The protein localises to the cytoplasm. The protein resides in the nucleus. It localises to the nucleolus. Functionally, non-catalytic component of the RNA exosome complex which has 3'-&gt;5' exoribonuclease activity and participates in a multitude of cellular RNA processing and degradation events. In the nucleus, the RNA exosome complex is involved in proper maturation of stable RNA species such as rRNA, snRNA and snoRNA, in the elimination of RNA processing by-products and non-coding 'pervasive' transcripts, such as antisense RNA species and cryptic unstable transcripts (CUTs), and of mRNAs with processing defects, thereby limiting or excluding their export to the cytoplasm. In the cytoplasm, the RNA exosome complex is involved in general mRNA turnover and in RNA surveillance pathways, preventing translation of aberrant mRNAs. The catalytic inactive RNA exosome core complex of 9 subunits (Exo-9) is proposed to play a pivotal role in the binding and presentation of RNA for ribonucleolysis, and to serve as a scaffold for the association with catalytic subunits and accessory proteins or complexes. ski6 is part of the hexameric ring of RNase PH domain-containing subunits proposed to form a central channel which threads RNA substrates for degradation. The polypeptide is Exosome complex component ski6 (ski6) (Schizosaccharomyces pombe (strain 972 / ATCC 24843) (Fission yeast)).